Reading from the N-terminus, the 370-residue chain is DNA replication and repair protein RecF (370 aa).

ATP is bound at residue G30 to T37.

The protein belongs to the RecF family.

It is found in the cytoplasm. Functionally, the RecF protein is involved in DNA metabolism; it is required for DNA replication and normal SOS inducibility. RecF binds preferentially to single-stranded, linear DNA. It also seems to bind ATP. This is DNA replication and repair protein RecF from Bacteroides fragilis (strain YCH46).